The chain runs to 296 residues: 4-hydroxybenzoate octaprenyltransferase (296 aa).

A run of 8 helical transmembrane segments spans residues 29-49 (IGIYLLLWPTLWSLWIAADGV), 55-75 (LLIFVLGVILMRAAGCVINDF), 102-122 (AWITFAVLVALSFGLVLLTNA), 146-166 (YYPQVVLGAAYSWGILMAFTA), 169-189 (GELPASAWLLFLANVLWTVAY), 219-239 (LIIGSLQGLTLLLLALAGSRF), 241-261 (LGLYFYLGLAVAAACFVWEAW), and 275-295 (FLHNHWAGLAIFLGTVADYAL).

The protein belongs to the UbiA prenyltransferase family. Mg(2+) serves as cofactor.

The protein resides in the cell inner membrane. The enzyme catalyses all-trans-octaprenyl diphosphate + 4-hydroxybenzoate = 4-hydroxy-3-(all-trans-octaprenyl)benzoate + diphosphate. The protein operates within cofactor biosynthesis; ubiquinone biosynthesis. Functionally, catalyzes the prenylation of para-hydroxybenzoate (PHB) with an all-trans polyprenyl group. Mediates the second step in the final reaction sequence of ubiquinone-8 (UQ-8) biosynthesis, which is the condensation of the polyisoprenoid side chain with PHB, generating the first membrane-bound Q intermediate 3-octaprenyl-4-hydroxybenzoate. This Pseudomonas aeruginosa (strain UCBPP-PA14) protein is 4-hydroxybenzoate octaprenyltransferase.